A 365-amino-acid chain; its full sequence is Cyclin-O protein B (365 aa).

Residues 22-64 (SGKRKRDSVYSPGDATPGDRGEGEPKCPSVGTKKRAKYSRHRK) form a disordered region. Residues 53–64 (TKKRAKYSRHRK) are compositionally biased toward basic residues.

This sequence belongs to the cyclin family.

It is found in the cytoplasm. Functionally, specifically required for generation of multiciliated cells, possibly by promoting a cell cycle state compatible with centriole amplification and maturation. Acts downstream of mcidas to promote mother centriole amplification and maturation in preparation for apical docking. This chain is Cyclin-O protein B (ccno-b), found in Xenopus laevis (African clawed frog).